An 840-amino-acid chain; its full sequence is Urease (840 aa).

The Urease domain occupies G402–F840. Positions 407, 409, and 490 each coordinate Ni(2+). At K490 the chain carries N6-carboxylysine. H492 contacts substrate. Ni(2+) is bound by residues H519 and H545. H593 (proton donor) is an active-site residue. Residue D633 coordinates Ni(2+).

The protein in the C-terminal section; belongs to the metallo-dependent hydrolases superfamily. Urease alpha subunit family. As to quaternary structure, homohexamer. Other oligomeric forms may exist depending on pH and presence of salts. Ni cation is required as a cofactor. In terms of processing, carboxylation allows a single lysine to coordinate two nickel ions.

It catalyses the reaction urea + 2 H2O + H(+) = hydrogencarbonate + 2 NH4(+). The protein operates within nitrogen metabolism; urea degradation; CO(2) and NH(3) from urea (urease route): step 1/1. With respect to regulation, P-hydroxymercuribenzoate irreversibly abolishes ureolytic activity, but does not inhibit the ability to activate platelets. Also inhibited by acetohydroxamic acid (AHA), a chelator of Ni2+ and Zn2+ ions. Functionally, urea hydrolase involved in nitrogen recycling from ureide, purine, and arginine catabolism. Is known to be highly toxic and lethal when given by intravenous route, producing convulsions and other signs of central nervous system intoxication associated with the high levels of ammonia formed in the blood of mice and rabbits. Is neurotoxic in mammals, when directly injected into hippocampus. It may induce seizures by acting at a neuronal network level, thereby disturbing electroencephalographic rhythms and causing metabolic alterations in key areas related to epileptogenesis and to neurogenic pulmonary edema. It increases calcium influx and neuronal firing rate in the hippocampus. Is able to insert itself into lipid bilayers, altering physicochemical properties of artificial membranes, and forming cation-selective ion channels. In vitro, has the ability to induce platelet aggregation, platelet granules secretion and release of ATP. In contrast to canatoxin, another urease from C.ensiformis, is not lethal to mice when intraperitoneally injected. The polypeptide is Urease (Canavalia ensiformis (Jack bean)).